The chain runs to 430 residues: UDP-N-acetylglucosamine 1-carboxyvinyltransferase (430 aa).

Residue 22–23 (KN) coordinates phosphoenolpyruvate. Arg102 is a binding site for UDP-N-acetyl-alpha-D-glucosamine. Cys126 acts as the Proton donor in catalysis. Cys126 carries the 2-(S-cysteinyl)pyruvic acid O-phosphothioketal modification. UDP-N-acetyl-alpha-D-glucosamine contacts are provided by residues 131-135 (RPVDL), 172-175 (KVSV), Asp317, and Ile339.

Belongs to the EPSP synthase family. MurA subfamily.

It is found in the cytoplasm. It carries out the reaction phosphoenolpyruvate + UDP-N-acetyl-alpha-D-glucosamine = UDP-N-acetyl-3-O-(1-carboxyvinyl)-alpha-D-glucosamine + phosphate. It participates in cell wall biogenesis; peptidoglycan biosynthesis. Functionally, cell wall formation. Adds enolpyruvyl to UDP-N-acetylglucosamine. This is UDP-N-acetylglucosamine 1-carboxyvinyltransferase from Rhizobium johnstonii (strain DSM 114642 / LMG 32736 / 3841) (Rhizobium leguminosarum bv. viciae).